An 877-amino-acid chain; its full sequence is Dystroglycan 1 (877 aa).

Positions 1-29 are cleaved as a signal peptide; the sequence is MRMSAGLSLLIPLWGRTFLLLLSVAVTQS. The interval 30–408 is required for laminin recognition; the sequence is RWPSEPSDAV…GHIRPTMTIP (379 aa). The tract at residues 49–71 is O-glycosylated at one site; sequence SMHSVLSDLHEAVPTVVGIPDGT. An N-linked (GlcNAc...) asparagine glycan is attached at N141. C182 and C264 are disulfide-bonded. Residues 316–468 are mucin-like domain; sequence ATPTPVTAIG…PPTRIRTTTS (153 aa). Residues T317, T319, and T379 are each glycosylated (O-linked (Man6P...) threonine). 2 disordered regions span residues 380–444 and 458–480; these read PTLG…PVPR and SPPT…QRPE. The span at 413–433 shows a compositional bias: low complexity; sequence PTAVATPPTPTTKNPRVSXPT. Residues 446 to 468 form an O-glycosylated at seven sites with GalNAc region; it reads TTKAPITRLETASPPTRIRTTTS. Positions 585 to 694 constitute a Peptidase S72 domain; the sequence is RAPARFTAKF…MSIAVTGSGS (110 aa). 3 N-linked (GlcNAc...) asparagine glycosylation sites follow: N623, N631, and N643. A disulfide bridge links C651 with C695. The span at 706 to 717 shows a compositional bias: pro residues; sequence PKRVPSEAPPTE. A disordered region spans residues 706–727; sequence PKRVPSEAPPTEVPDRDPEKSS. Residues 718–727 show a composition bias toward basic and acidic residues; the sequence is VPDRDPEKSS. A helical membrane pass occupies residues 732-757; sequence YLHTVIPAVVVAAILLIAGIIAMICY. Residues 758-764 carry the Nuclear localization signal motif; it reads RKKRKGK. At T772 the chain carries Phosphothreonine. The segment at 801-877 is required for interaction with CAV3; that stretch reads LQEEKAPLPP…YRSPPPYVPP (77 aa). Residues 805–877 form a disordered region; it reads KAPLPPPEYP…YRSPPPYVPP (73 aa). Over residues 814–828 the composition is skewed to polar residues; the sequence is PNQSVPETTPLNQDT. Positions 841 to 852 are enriched in pro residues; that stretch reads NAPPYQPPPPFT. The tract at residues 862 to 877 is required for binding DMD and UTRN; sequence PKNMTPYRSPPPYVPP. The PPXY motif signature appears at 871–874; sequence PPPY. Y874 is modified (phosphotyrosine; by SRC).

As to quaternary structure, monomer. Heterodimer of alpha- and beta-dystroglycan subunits which are the central components of the dystrophin-glycoprotein complex. This complex then can form a dystrophin-associated glycoprotein complex (DGC) which is composed of three subcomplexes: a cytoplasmic complex comprised of DMD (or UTRN), DTNA and a number of syntrophins, such as SNTB1, SNTB2, SNTG1 and SNTG2, the transmembrane dystroglycan complex, and the sarcoglycan-sarcospan complex. Interacts (via the N-terminal of alphaDAG1) with LARGE1; the interaction enhances laminin binding. Interacts with SGCD. Interacts with AGR2 and AGR3. Interacts (betaDAG1) with DMD; the interaction is inhibited by phosphorylation on the PPXY motif. Interacts (betaDAG1, via its PPXY motif) with UTRN (via its WWW and ZZ domains); the interaction is inhibited by phosphorylation on the PPXY motif. Interacts (betaDAG1, via its phosphorylated PPXY motif) with the SH2 domain-containing proteins, FYN, CSK, NCK and SHC. Interacts (betaDAG1) with CAV3 (via a central WW-like domain); the interaction disrupts the binding of DMD. BetaDAG1 directly interacts with ANK3, but not with ANK2; this interaction does not interfere with DMD-binding and is required for retention at costameres. Identified in a dystroglycan complex that contains at least PRX, DRP2, UTRN, DMD and DAG1. Interacts with POMGNT1. BetaDAG1 interacts with CD93. In terms of processing, O-glycosylated. POMGNT1 catalyzes the initial addition of N-acetylglucosamine, giving rise to the GlcNAc(beta1-2)Man(alpha1-)O-Ser/Thr moiety and thus providing the necessary basis for the addition of further carbohydrate moieties. Heavily O-glycosylated comprising of up to two thirds of its mass and the carbohydrate composition differs depending on tissue type. Mucin-type O-glycosylation is important for ligand binding activity. O-mannosylation of alpha-DAG1 is found in high abundance in both brain and muscle where the most abundant glycan is Sia-alpha-2-3-Gal-beta-1-4-Glc-NAc-beta-1-2-Man. In muscle, glycosylation on Thr-317, Thr-319 and Thr-379 by a phosphorylated O-mannosyl glycan with the structure 2-(N-acetylamido)-2-deoxygalactosyl-beta-1,3-2-(N-acetylamido)-2-deoxyglucosyl-beta-1,4-6-phosphomannose is mediated by like-acetylglucosaminyltransferase (LARGE1) protein amd is required for laminin binding. O-glycosylated in the N-terminal region with a core 1 or possibly core 8 glycan. The brain form displays a unique glycosylation pattern which is absent in other tissues; this form shows enhanced binding to laminin LAMA5 compared to the skeletal muscle form. Post-translationally, N-glycosylated. Autolytic cleavage produces the alpha and beta subunits. In cutaneous cells, as well as in certain pathological conditions, shedding of beta-dystroglycan can occur releasing a peptide of about 30 kDa. In terms of processing, SRC-mediated phosphorylation of the PPXY motif of the beta subunit recruits SH2 domain-containing proteins, but inhibits binding to WWW domain-containing proteins, DMD and UTRN. This phosphorylation also inhibits nuclear entry.

Its subcellular location is the secreted. It localises to the extracellular space. The protein localises to the cell membrane. The protein resides in the cytoplasm. It is found in the cytoskeleton. Its subcellular location is the nucleus. It localises to the nucleoplasm. The protein localises to the sarcolemma. The protein resides in the postsynaptic cell membrane. Its function is as follows. The dystroglycan complex is involved in a number of processes including laminin and basement membrane assembly, sarcolemmal stability, cell survival, peripheral nerve myelination, nodal structure, cell migration, and epithelial polarization. Extracellular peripheral glycoprotein that acts as a receptor for extracellular matrix proteins containing laminin-G domains. Receptor for laminin-2 (LAMA2) and agrin in peripheral nerve Schwann cells. Also acts as a receptor for laminin LAMA5. In terms of biological role, transmembrane protein that plays important roles in connecting the extracellular matrix to the cytoskeleton. Acts as a cell adhesion receptor in both muscle and non-muscle tissues. Receptor for both DMD and UTRN and, through these interactions, scaffolds axin to the cytoskeleton. Also functions in cell adhesion-mediated signaling and implicated in cell polarity. The chain is Dystroglycan 1 from Sus scrofa (Pig).